The following is a 434-amino-acid chain: MVVEFTKSEALHKEALEHIVGGVNSPSRSFKAVGGGAPVAMERGKGAYFWDVDGNKYIDYLAAYGPIITGHAHPHITKAITTAAENGVLYGTPTALEVKFAKMLKEAMPALDKVRFVNSGTEAVMTTIRVARAYTGRTKIMKFAGCYHGHSDLVLVAAGSGPSTLGTPDSAGVPQSIAQEVITVPFNNVETLKEALDKWGHEVAAILVEPIVGNFGIVEPKPGFLEKVNELVHEAGALVIYDEVITAFRFMYGGAQDLLGVTPDLTALGKVIGGGLPIGAYGGKKEIMEQVAPLGPAYQAGTMAGNPASMASGIACLEVLQQEGLYEKLDELGAMLEKGILEQAAKHNIDITLNRLKGALTVYFTTNTIENYDAAQDTDGEMFGKFFKLMLQEGVNLAPSKYEAWFLTTEHTKEDIEYTIEAVGRAFAALADNK.

N6-(pyridoxal phosphate)lysine is present on K270.

It belongs to the class-III pyridoxal-phosphate-dependent aminotransferase family. HemL subfamily. As to quaternary structure, homodimer. The cofactor is pyridoxal 5'-phosphate.

It is found in the cytoplasm. It catalyses the reaction (S)-4-amino-5-oxopentanoate = 5-aminolevulinate. The protein operates within porphyrin-containing compound metabolism; protoporphyrin-IX biosynthesis; 5-aminolevulinate from L-glutamyl-tRNA(Glu): step 2/2. This chain is Glutamate-1-semialdehyde 2,1-aminomutase 1, found in Bacillus thuringiensis subsp. konkukian (strain 97-27).